The following is a 153-amino-acid chain: Troponin C (153 aa).

4 consecutive EF-hand domains span residues 9–44 (EQVQ…LGQT), 45–80 (FEEN…FLVE), 85–120 (AMQE…LDDK), and 121–153 (LTED…MTGD). Positions 58, 60, 62, 64, and 69 each coordinate Ca(2+). Residues Asp134, Asp136, Ser138, Thr140, and Glu145 each coordinate Ca(2+).

Belongs to the troponin C family.

In terms of biological role, troponin is the central regulatory protein of striated muscle contraction. Tn consists of three components: Tn-I which is the inhibitor of actomyosin ATPase, Tn-T which contains the binding site for tropomyosin and Tn-C. The binding of calcium to Tn-C abolishes the inhibitory action of Tn on actin filaments. The protein is Troponin C of Tyrophagus putrescentiae (Mold mite).